The primary structure comprises 624 residues: MEAVIQTRGLLSLPTKPIGVRSQLQPSHGLKQRLFAAKPRNLHGLSLSFNGHKKFQTFEPTLHGISISHKERSTEFICKAEAAAAGDGAVFGEGDSAAVVASPKIFGVEVATLKKIIPLGLMFFCILFNYTILRDTKDVLVVTAKGSSAEIIPFLKTWVNLPMAIGFMLLYTKLSNVLSKKALFYTVIVPFIIYFGAFGFVMYPLSNYIHPEALADKLLTTLGPRFMGPIAILRIWSFCLFYVMAELWGSVVVSVLFWGFANQITTVDEAKKFYPLFGLGANVALIFSGRTVKYFSNLRKNLGPGVDGWAVSLKAMMSIVVGMGLAICLLYWWVNRYVPLPTRSKNKKEKPKMGTMESLKFLVSSPYIRDLATLVVAYGISINLVEVTWKSKLKAQFPSPNEYSAFMGDFSTCTGVATFTMMLLSQYVFNKYGWGVAAKITPTVLLLTGVAFFSLILFGGPFAPLVAKLGMTPLLAAVYVGALQNIFSKSAKYSLFDPCKEMAYIPLDEDTKVKGKAAIDVVCNPLGKSGGALIQQFMILSFGSLANSTPYLGMILLVIVTAWLAAAKSLEGQFNSLRSEEELEKEMERASSVKIPVVSQDESGNGSLGESPSSSPEKSAPTNL.

A chloroplast-targeting transit peptide spans 1 to 79 (MEAVIQTRGL…KERSTEFICK (79 aa)). Residue alanine 80 is modified to N-acetylalanine. The next 6 helical transmembrane spans lie at 108–128 (VEVATLKKIIPLGLMFFCILF), 182–202 (ALFYTVIVPFIIYFGAFGFVM), 240–260 (LFYVMAELWGSVVVSVLFWGF), 315–335 (AMMSIVVGMGLAICLLYWWVN), 446–466 (LLTGVAFFSLILFGGPFAPLV), and 545–565 (LANSTPYLGMILLVIVTAWLA). Residues 579–624 (SEEELEKEMERASSVKIPVVSQDESGNGSLGESPSSSPEKSAPTNL) form a disordered region. Residues 602 to 624 (ESGNGSLGESPSSSPEKSAPTNL) are compositionally biased toward low complexity.

The protein belongs to the ADP/ATP translocase tlc (TC 2.A.12.2) family.

The protein localises to the plastid. Its subcellular location is the chloroplast membrane. May function as an ATP importer. This Arabidopsis thaliana (Mouse-ear cress) protein is ADP,ATP carrier protein 1, chloroplastic (AATP1).